Reading from the N-terminus, the 461-residue chain is Adenosylmethionine-8-amino-7-oxononanoate aminotransferase (461 aa).

Pyridoxal 5'-phosphate is bound at residue 117–118 (GA). Residue Tyr-150 coordinates substrate. Residue Asp-263 participates in pyridoxal 5'-phosphate binding. Residues Lys-296, Gly-331, and Arg-426 each contribute to the substrate site. Position 296 is an N6-(pyridoxal phosphate)lysine (Lys-296).

This sequence belongs to the class-III pyridoxal-phosphate-dependent aminotransferase family. BioA subfamily. In terms of assembly, homodimer. The cofactor is pyridoxal 5'-phosphate.

It localises to the cytoplasm. The catalysed reaction is (8S)-8-amino-7-oxononanoate + S-adenosyl-L-methionine = S-adenosyl-4-methylsulfanyl-2-oxobutanoate + (7R,8S)-7,8-diammoniononanoate. It participates in cofactor biosynthesis; biotin biosynthesis; 7,8-diaminononanoate from 8-amino-7-oxononanoate (SAM route): step 1/1. In terms of biological role, catalyzes the transfer of the alpha-amino group from S-adenosyl-L-methionine (SAM) to 7-keto-8-aminopelargonic acid (KAPA) to form 7,8-diaminopelargonic acid (DAPA). It is the only aminotransferase known to utilize SAM as an amino donor. The sequence is that of Adenosylmethionine-8-amino-7-oxononanoate aminotransferase from Methanocaldococcus jannaschii (strain ATCC 43067 / DSM 2661 / JAL-1 / JCM 10045 / NBRC 100440) (Methanococcus jannaschii).